The sequence spans 371 residues: Fe(3+) ions import ATP-binding protein FbpC (371 aa).

Positions 5–235 (IKIENAQKRY…PANLFVATFI (231 aa)) constitute an ABC transporter domain. Residue 37–44 (GPSGCGKT) coordinates ATP.

This sequence belongs to the ABC transporter superfamily. Fe(3+) ion importer (TC 3.A.1.10) family. The complex is composed of two ATP-binding proteins (FbpC), two transmembrane proteins (FbpB) and a solute-binding protein (FbpA).

The protein resides in the cell inner membrane. It catalyses the reaction Fe(3+)(out) + ATP + H2O = Fe(3+)(in) + ADP + phosphate + H(+). Functionally, part of the ABC transporter complex FbpABC involved in Fe(3+) ions import. Responsible for energy coupling to the transport system. This chain is Fe(3+) ions import ATP-binding protein FbpC, found in Fusobacterium nucleatum subsp. nucleatum (strain ATCC 25586 / DSM 15643 / BCRC 10681 / CIP 101130 / JCM 8532 / KCTC 2640 / LMG 13131 / VPI 4355).